The primary structure comprises 121 residues: MIQQETYLTVADNSGAKRLQCIRVLGSNRRYAHVGDVIVAAVKDAVPNMGVKKSDVVKAVVVRTKATLRRETGNSIRFDDNAAVLINEDKNPRGTRVFGPVARELRERNYTKIVSLAPEVI.

It belongs to the universal ribosomal protein uL14 family. Part of the 50S ribosomal subunit. Forms a cluster with proteins L3 and L19. In the 70S ribosome, L14 and L19 interact and together make contacts with the 16S rRNA in bridges B5 and B8.

Functionally, binds to 23S rRNA. Forms part of two intersubunit bridges in the 70S ribosome. The protein is Large ribosomal subunit protein uL14 of Prochlorococcus marinus (strain SARG / CCMP1375 / SS120).